The sequence spans 131 residues: MTDPIADYLTRLRNAIMAGHRVVSVPASNIKKEITKILFDKGYILNYKFEENDSQGIIKVALKYDLAHKVNAIKKLKRVSRPGLRKYVGYRDMPRVLNGLGIAIVSTPRGVMTDKEARELKVGGEVLCYVY.

Belongs to the universal ribosomal protein uS8 family. Part of the 30S ribosomal subunit. Contacts proteins S5 and S12.

Its function is as follows. One of the primary rRNA binding proteins, it binds directly to 16S rRNA central domain where it helps coordinate assembly of the platform of the 30S subunit. This Porphyromonas gingivalis (strain ATCC 33277 / DSM 20709 / CIP 103683 / JCM 12257 / NCTC 11834 / 2561) protein is Small ribosomal subunit protein uS8.